A 192-amino-acid chain; its full sequence is UPF0312 protein Avin_03250 (192 aa).

An N-terminal signal peptide occupies residues 1–23 (MLKKTLAALALGSALLGAGQAMA).

It belongs to the UPF0312 family. Type 1 subfamily.

Its subcellular location is the periplasm. This Azotobacter vinelandii (strain DJ / ATCC BAA-1303) protein is UPF0312 protein Avin_03250.